The following is a 371-amino-acid chain: Cyanide hydratase (371 aa).

The CN hydrolase domain maps to 6–285; sequence YKAAAVTSEP…DGLLYVDIDL (280 aa). The active-site Proton acceptor is glutamate 46. Lysine 128 is an active-site residue. Residue cysteine 163 is the Nucleophile of the active site. The segment covering 339 to 353 has biased composition (basic and acidic residues); that stretch reads GLNRPLDPPKDERHG. A disordered region spans residues 339–371; the sequence is GLNRPLDPPKDERHGIVGVAGQKSAEQRKAGDL.

The protein belongs to the carbon-nitrogen hydrolase superfamily. Nitrilase family. Oligomer of dimers, forming left-handed helical fibers.

The catalysed reaction is formamide = hydrogen cyanide + H2O. In terms of biological role, catalyzes the hydration of cyanide to formamide. Degradation of cyanide may be important for plant pathogenic fungi in infection of cyanogenic plants. Also acts on 2-cyanopyridine, fumaronitrile and benzonitrile, albeit at a lower rate. The sequence is that of Cyanide hydratase (nit) from Stereum hirsutum (strain FP-91666) (White-rot fungus).